Reading from the N-terminus, the 601-residue chain is Keratin, type II cytoskeletal 5 (601 aa).

Residues 1-168 (MSRQSTVSFR…DPTIQRVRTE (168 aa)) form a head region. 4 positions are modified to phosphoserine: Ser-5, Ser-8, Ser-16, and Ser-21. Residue Thr-24 is modified to Phosphothreonine; by CDK1. 6 positions are modified to phosphoserine: Ser-26, Ser-36, Ser-50, Ser-64, Ser-71, and Ser-75. Thr-152 bears the Phosphothreonine; by CDK1 mark. Phosphothreonine; by AURKB is present on Thr-167. The interval 169 to 204 (EREQIKTLNNKFASFIDKVRFLEQQNKVLDTKWALL) is coil 1A. The IF rod domain maps to 169 to 482 (EREQIKTLNN…KLLEGEECRL (314 aa)). The linker 1 stretch occupies residues 205–223 (QEQGTKTVRQNLEPLLEQY). A coil 1B region spans residues 224–316 (INNLRRQLDG…FFDAELSQMQ (93 aa)). The linker 12 stretch occupies residues 317-339 (THVSDTSVVLSMDNNRSLDLDSI). Positions 340–478 (IAEVKAQYED…ATYRKLLEGE (139 aa)) are coil 2. The interval 479–601 (ECRLSGEGVG…TSSSRKSFKS (123 aa)) is tail. The segment at 576-601 (FGSGGGSSSSVKFVSTTSSSRKSFKS) is disordered. Low complexity predominate over residues 583–601 (SSSVKFVSTTSSSRKSFKS).

It belongs to the intermediate filament family. In terms of assembly, heterodimer of a type I and a type II keratin. Heterodimer with type I keratin KRT25 leading to the formation of keratin intermediate filament (KIF) network. Forms a heterodimer (via 2B domains) with KRT14 (via 2B domains). Interacts with TCHP. Interacts with EPPK1. Interacts with AMELX. Interacts with PKP1 (via N-terminus) and PKP2. In terms of processing, phosphorylated by CDK1, AURKB and Rho-kinase, phosphorylation is regulated by the cell cycle. Thr-24 phosphorylation, mediated by CDK1, peaks during prometaphase or metaphase cells with phosphorylated filamentous structures evident throughout the cytoplasm early mitosis. CDK1 phosphorylates Thr-24 in mitotic cells at the site of injury. Post-translationally, O-glycosylated.

The protein resides in the cytoplasm. In terms of biological role, required for the formation of keratin intermediate filaments in the basal epidermis and maintenance of the skin barrier in response to mechanical stress. Regulates the recruitment of Langerhans cells to the epidermis, potentially by modulation of the abundance of macrophage chemotactic cytokines, macrophage inflammatory cytokines and CTNND1 localization in keratinocytes. The protein is Keratin, type II cytoskeletal 5 of Bos taurus (Bovine).